Reading from the N-terminus, the 1065-residue chain is Carbamoyl phosphate synthase large chain (1065 aa).

The segment at 1–401 (MPLDKTIKKV…ALLKAVTSLE (401 aa)) is carboxyphosphate synthetic domain. ATP-binding residues include Arg129, Arg169, Gly175, Gly176, Gln208, Val210, Glu215, Gly241, Val242, His243, Gln284, and Glu298. Residues 133–327 (KNLMEEIDEP…IAKIAAKIAV (195 aa)) form the ATP-grasp 1 domain. The Mg(2+) site is built by Gln284, Glu298, and Asn300. Residues Gln284, Glu298, and Asn300 each contribute to the Mn(2+) site. The interval 402 to 548 (GKISGLRLEK…YSSYENEDEN (147 aa)) is oligomerization domain. The carbamoyl phosphate synthetic domain stretch occupies residues 549 to 931 (EVTDDKKIVV…AIYKGFRAAG (383 aa)). Residues 673–863 (SELLKELNIP…MVKLAVEILT (191 aa)) form the ATP-grasp 2 domain. Positions 709, 748, 750, 754, 779, 780, 781, 782, 822, and 834 each coordinate ATP. Mg(2+) is bound by residues Gln822, Glu834, and Asn836. Mn(2+) is bound by residues Gln822, Glu834, and Asn836. Residues 932–1065 (IEVPKDGGNL…EYRAMKEYFK (134 aa)) form the MGS-like domain. Positions 932 to 1065 (IEVPKDGGNL…EYRAMKEYFK (134 aa)) are allosteric domain.

The protein belongs to the CarB family. As to quaternary structure, composed of two chains; the small (or glutamine) chain promotes the hydrolysis of glutamine to ammonia, which is used by the large (or ammonia) chain to synthesize carbamoyl phosphate. Tetramer of heterodimers (alpha,beta)4. The cofactor is Mg(2+). It depends on Mn(2+) as a cofactor.

The catalysed reaction is hydrogencarbonate + L-glutamine + 2 ATP + H2O = carbamoyl phosphate + L-glutamate + 2 ADP + phosphate + 2 H(+). It catalyses the reaction hydrogencarbonate + NH4(+) + 2 ATP = carbamoyl phosphate + 2 ADP + phosphate + 2 H(+). The protein operates within amino-acid biosynthesis; L-arginine biosynthesis; carbamoyl phosphate from bicarbonate: step 1/1. It participates in pyrimidine metabolism; UMP biosynthesis via de novo pathway; (S)-dihydroorotate from bicarbonate: step 1/3. Functionally, large subunit of the glutamine-dependent carbamoyl phosphate synthetase (CPSase). CPSase catalyzes the formation of carbamoyl phosphate from the ammonia moiety of glutamine, carbonate, and phosphate donated by ATP, constituting the first step of 2 biosynthetic pathways, one leading to arginine and/or urea and the other to pyrimidine nucleotides. The large subunit (synthetase) binds the substrates ammonia (free or transferred from glutamine from the small subunit), hydrogencarbonate and ATP and carries out an ATP-coupled ligase reaction, activating hydrogencarbonate by forming carboxy phosphate which reacts with ammonia to form carbamoyl phosphate. The sequence is that of Carbamoyl phosphate synthase large chain from Clostridium acetobutylicum (strain ATCC 824 / DSM 792 / JCM 1419 / IAM 19013 / LMG 5710 / NBRC 13948 / NRRL B-527 / VKM B-1787 / 2291 / W).